A 345-amino-acid polypeptide reads, in one-letter code: uncharacterized protein (345 aa).

The segment at 1-98 (MNDEMKGKSG…ISGKSFIDPE (98 aa)) is disordered. Basic and acidic residues-rich tracts occupy residues 18–27 (RSDDDSDKRT), 42–68 (SRAD…EDSP), and 76–86 (PGDETPEKADH).

Belongs to the class IV-like SAM-binding methyltransferase superfamily. RNA methyltransferase TrmH family.

This is an uncharacterized protein from Escherichia coli O157:H7.